Reading from the N-terminus, the 107-residue chain is Heme-degrading monooxygenase (107 aa).

The region spanning 2-94 is the ABM domain; it reads IIVTNTAKIT…YILDNKISYY (93 aa). Residue Asn-6 participates in Fe cation binding. His-76 is a heme binding site.

The protein belongs to the antibiotic biosynthesis monooxygenase family. Heme-degrading monooxygenase IsdG subfamily. In terms of assembly, homodimer.

Its subcellular location is the cytoplasm. It catalyses the reaction heme b + 3 reduced [NADPH--hemoprotein reductase] + 3 O2 = biliverdin IXalpha + CO + Fe(2+) + 3 oxidized [NADPH--hemoprotein reductase] + 3 H2O + H(+). Allows bacterial pathogens to use the host heme as an iron source. Catalyzes the oxidative degradation of the heme macrocyclic porphyrin ring to the biliverdin in the presence of a suitable electron donor such as ascorbate or NADPH--cytochrome P450 reductase, with subsequent release of free iron. This Bacillus cereus (strain AH187) protein is Heme-degrading monooxygenase.